Reading from the N-terminus, the 280-residue chain is uncharacterized protein (280 aa).

A run of 6 helical transmembrane segments spans residues 3 to 23 (ILIT…GMYI), 52 to 72 (FGLF…GSIV), 81 to 101 (INGL…NLQI), 123 to 143 (NWLV…LILL), 196 to 216 (FADI…IIIG), and 233 to 253 (IFAC…LLHI).

The protein localises to the cell membrane. This is an uncharacterized protein from Rickettsia prowazekii (strain Madrid E).